A 139-amino-acid polypeptide reads, in one-letter code: Putative nickel-responsive regulator (139 aa).

Residues H79, H90, H92, and C98 each coordinate Ni(2+).

The protein belongs to the transcriptional regulatory CopG/NikR family. Ni(2+) serves as cofactor.

In terms of biological role, transcriptional regulator. This chain is Putative nickel-responsive regulator, found in Geobacter metallireducens (strain ATCC 53774 / DSM 7210 / GS-15).